Reading from the N-terminus, the 747-residue chain is Rho GTPase-activating protein 24 (747 aa).

Disordered regions lie at residues 1–20 (MEER…KNTK) and 327–475 (FPKD…GTHS). The region spanning 17-123 (KNTKCGWLRK…WVKSIRRVIW (107 aa)) is the PH domain. The region spanning 133–327 (QKLEDTVRYE…VMISKHDRLF (195 aa)) is the Rho-GAP domain. 2 stretches are compositionally biased toward polar residues: residues 334-346 (QSKP…SNNN) and 355-367 (GQLQ…NTKE). Residues serine 368, serine 390, serine 395, serine 397, serine 401, serine 412, serine 414, and serine 436 each carry the phosphoserine modification. Residues 368 to 380 (SPVRRCSWDKPES) show a composition bias toward basic and acidic residues. Positions 381–404 (PQRSSVDNGSPTALSGSKTNSPRN) are enriched in polar residues. Residues 431–475 (IVTNGSFSSSNAEGVEKPQTTPNGSLQARRTSSLKSSGTKMGTHS) are compositionally biased toward polar residues. Threonine 451 is subject to Phosphothreonine. Position 494 is a phosphoserine (serine 494). The segment at 581–639 (DFYVGNFEDPVLDGPPQDDLSHPGDYENKSDRRSVGGRSSRATSSSDNSETFVGNTSSN) is disordered. A compositionally biased stretch (basic and acidic residues) spans 599–614 (DLSHPGDYENKSDRRS). Residues 616–629 (GGRSSRATSSSDNS) show a composition bias toward low complexity. The segment covering 630 to 639 (ETFVGNTSSN) has biased composition (polar residues). A coiled-coil region spans residues 648 to 728 (SSLKQEMTKQ…KEMEQFFSTF (81 aa)).

In terms of assembly, interacts with FLNA. In terms of processing, phosphorylated by ROCK, leading to activate the RacGAP activity.

The protein localises to the cytoplasm. Its subcellular location is the cytoskeleton. It is found in the cell junction. The protein resides in the adherens junction. It localises to the focal adhesion. The protein localises to the cell projection. Rho GTPase-activating protein involved in cell polarity, cell morphology and cytoskeletal organization. Acts as a GTPase activator for the Rac-type GTPase by converting it to an inactive GDP-bound state. Controls actin remodeling by inactivating Rac downstream of Rho leading to suppress leading edge protrusion and promotes cell retraction to achieve cellular polarity. Able to suppress RAC1 and CDC42 activity in vitro. Overexpression induces cell rounding with partial or complete disruption of actin stress fibers and formation of membrane ruffles, lamellipodia, and filopodia. Isoform 2 is a vascular cell-specific GAP involved in modulation of angiogenesis. In Mus musculus (Mouse), this protein is Rho GTPase-activating protein 24 (Arhgap24).